The chain runs to 321 residues: Lipoyl synthase (321 aa).

Residues cysteine 68, cysteine 73, cysteine 79, cysteine 94, cysteine 98, cysteine 101, and serine 308 each coordinate [4Fe-4S] cluster. The Radical SAM core domain occupies 80–297 (FNHGTATFMI…KALADELGFT (218 aa)).

This sequence belongs to the radical SAM superfamily. Lipoyl synthase family. Requires [4Fe-4S] cluster as cofactor.

It localises to the cytoplasm. The enzyme catalyses [[Fe-S] cluster scaffold protein carrying a second [4Fe-4S](2+) cluster] + N(6)-octanoyl-L-lysyl-[protein] + 2 oxidized [2Fe-2S]-[ferredoxin] + 2 S-adenosyl-L-methionine + 4 H(+) = [[Fe-S] cluster scaffold protein] + N(6)-[(R)-dihydrolipoyl]-L-lysyl-[protein] + 4 Fe(3+) + 2 hydrogen sulfide + 2 5'-deoxyadenosine + 2 L-methionine + 2 reduced [2Fe-2S]-[ferredoxin]. The protein operates within protein modification; protein lipoylation via endogenous pathway; protein N(6)-(lipoyl)lysine from octanoyl-[acyl-carrier-protein]: step 2/2. Its function is as follows. Catalyzes the radical-mediated insertion of two sulfur atoms into the C-6 and C-8 positions of the octanoyl moiety bound to the lipoyl domains of lipoate-dependent enzymes, thereby converting the octanoylated domains into lipoylated derivatives. The polypeptide is Lipoyl synthase (Shewanella baltica (strain OS185)).